A 77-amino-acid chain; its full sequence is Large ribosomal subunit protein bL28 (77 aa).

The protein belongs to the bacterial ribosomal protein bL28 family.

This Leptothrix cholodnii (strain ATCC 51168 / LMG 8142 / SP-6) (Leptothrix discophora (strain SP-6)) protein is Large ribosomal subunit protein bL28.